The primary structure comprises 20 residues: Hemoglobinase-like protein 1 (20 aa).

The protein belongs to the peptidase C13 family.

It carries out the reaction Hydrolysis of proteins and small molecule substrates at -Asn-|-Xaa- bonds.. The sequence is that of Hemoglobinase-like protein 1 from Fasciola hepatica (Liver fluke).